We begin with the raw amino-acid sequence, 159 residues long: MIAIYPGRFDPVTLGHLSVARRASGFCDRLIIAVFDNPAKPGLFTAAERVDLIKQSVKDLPNVEVHSFSGLMVNFARRMGVSLIIRGLRVGADFEREMEMYVMNRRLDEGIELCCLFSEPQYQYLSASLIKEVVMLGGDSSGLISEHVADALKNKLASA.

Histidine 16 serves as a coordination point for ATP. Positions 40, 72, and 86 each coordinate substrate. Residues 87–89 (GLR), glutamate 97, and 122–128 (YQYLSAS) each bind ATP.

Belongs to the bacterial CoaD family. As to quaternary structure, homohexamer. Mg(2+) is required as a cofactor.

Its subcellular location is the cytoplasm. The enzyme catalyses (R)-4'-phosphopantetheine + ATP + H(+) = 3'-dephospho-CoA + diphosphate. The protein operates within cofactor biosynthesis; coenzyme A biosynthesis; CoA from (R)-pantothenate: step 4/5. Reversibly transfers an adenylyl group from ATP to 4'-phosphopantetheine, yielding dephospho-CoA (dPCoA) and pyrophosphate. The sequence is that of Phosphopantetheine adenylyltransferase from Dehalococcoides mccartyi (strain ATCC BAA-2266 / KCTC 15142 / 195) (Dehalococcoides ethenogenes (strain 195)).